Reading from the N-terminus, the 326-residue chain is DNA-directed RNA polymerase I subunit RPA43 (326 aa).

The interval 179-202 is disordered; the sequence is VINTDENNGNNNNEDNKDSNGGSN. The segment covering 182-202 has biased composition (low complexity); the sequence is TDENNGNNNNEDNKDSNGGSN. S244, S251, S265, S269, and S285 each carry phosphoserine. Residues 288–304 show a composition bias toward basic and acidic residues; the sequence is NKESHKELDLPEVKEDN. Residues 288–326 are disordered; it reads NKESHKELDLPEVKEDNGSEIVYEENTSESNDGESSDSD. Residues 309 to 326 show a composition bias toward acidic residues; it reads VYEENTSESNDGESSDSD.

Belongs to the eukaryotic RPA43 RNA polymerase subunit family. In terms of assembly, component of the RNA polymerase I (Pol I) complex consisting of 14 subunits: RPA135, RPA190, RPC40, RPA14, RPB5, RPO26, RPA43, RPB8, RPA12, RPB10, RPC19, RPC10, RPA49 and RPA34. The complex is composed of a horseshoe-shaped core containing ten subunits (RPA135, RPA190, RPB5, RPO26, RPB8, RPB10, RPC10, RPA12, RPC19 and RPC40) where RPA135 and RPA190 form the DNA-binding cleft. Outside of the core, RPA14 and RPA43 form the stalk that mediates interactions with transcription initiation factors and newly synthesized RNA. Interacts with RPO26/ABC23 and with the initiation factor RRN3. Post-translationally, contains an average of four phosphates per molecule.

It is found in the nucleus. The protein localises to the nucleolus. Functionally, DNA-dependent RNA polymerases catalyze the transcription of DNA into RNA using the four ribonucleoside triphosphates as substrates. Component of RNA polymerase I (Pol I) which synthesizes ribosomal RNA precursors. Besides, RNA polymerase I has intrinsic RNA cleavage activity. Through its association with RRN3 is involved in recruitment of Pol I to rDNA promoters. In vitro, the A13-A43 subcomplex binds single-stranded RNA. The chain is DNA-directed RNA polymerase I subunit RPA43 (RPA43) from Saccharomyces cerevisiae (strain ATCC 204508 / S288c) (Baker's yeast).